A 37-amino-acid chain; its full sequence is Albumin-2 (37 aa).

The Hemopexin repeat unit spans residues 6–37; that stretch reads IANFSVLNXEAYLFINDKYVLLDYAPGTXNDK.

In terms of assembly, dimer. As to expression, expressed in seeds (at protein level).

The protein localises to the cytoplasm. It is found in the cytosol. Its function is as follows. Binds hemin and thiamine. The chain is Albumin-2 from Lens culinaris (Lentil).